The sequence spans 700 residues: Peroxisomal acyl-coenzyme A oxidase 1 (700 aa).

FAD is bound by residues Thr-147, Gly-186, and 412 to 417; that span reads CGGHGY. Catalysis depends on Glu-437, which acts as the Proton acceptor. The short motif at 698 to 700 is the Microbody targeting signal element; the sequence is SKL.

Belongs to the acyl-CoA oxidase family. The cofactor is FAD.

It is found in the peroxisome. It catalyses the reaction a 2,3-saturated acyl-CoA + O2 = a (2E)-enoyl-CoA + H2O2. Its function is as follows. Catalyzes the desaturation of acyl-CoAs to 2-trans-enoyl-CoAs. First enzyme of the fatty acid beta-oxidation pathway. This is Peroxisomal acyl-coenzyme A oxidase 1 (acox1) from Dictyostelium discoideum (Social amoeba).